We begin with the raw amino-acid sequence, 726 residues long: Catalase-peroxidase (726 aa).

Residues 1-33 (MSTTDDTHNTLSTGKCPFHQGGHDRSAGAGTAS) are disordered. The tryptophyl-tyrosyl-methioninium (Trp-Tyr) (with M-252) cross-link spans 105 to 226 (WHGAGTYRSI…LGATEMGLIY (122 aa)). Residue H106 is the Proton acceptor of the active site. The tryptophyl-tyrosyl-methioninium (Tyr-Met) (with W-105) cross-link spans 226-252 (YVNPEGPDHSGEPLSAAAAIRATFGNM). H267 serves as a coordination point for heme b.

It belongs to the peroxidase family. Peroxidase/catalase subfamily. In terms of assembly, homodimer or homotetramer. Heme b is required as a cofactor. In terms of processing, formation of the three residue Trp-Tyr-Met cross-link is important for the catalase, but not the peroxidase activity of the enzyme.

The enzyme catalyses H2O2 + AH2 = A + 2 H2O. It carries out the reaction 2 H2O2 = O2 + 2 H2O. Its function is as follows. Bifunctional enzyme with both catalase and broad-spectrum peroxidase activity. The sequence is that of Catalase-peroxidase from Salmonella paratyphi A (strain ATCC 9150 / SARB42).